The following is a 503-amino-acid chain: Aromatase (503 aa).

Residues 21–41 (VTVSAMPLLLIMGLLLLIWNC) form a helical membrane-spanning segment. Asp-309 and Met-374 together coordinate substrate. Cys-437 serves as a coordination point for heme.

This sequence belongs to the cytochrome P450 family. Heme serves as cofactor.

The protein localises to the endoplasmic reticulum membrane. It is found in the microsome membrane. The enzyme catalyses testosterone + 3 reduced [NADPH--hemoprotein reductase] + 3 O2 = 17beta-estradiol + formate + 3 oxidized [NADPH--hemoprotein reductase] + 4 H2O + 4 H(+). It catalyses the reaction androst-4-ene-3,17-dione + 3 reduced [NADPH--hemoprotein reductase] + 3 O2 = estrone + formate + 3 oxidized [NADPH--hemoprotein reductase] + 4 H2O + 4 H(+). The catalysed reaction is androst-4-ene-3,17-dione + reduced [NADPH--hemoprotein reductase] + O2 = 19-hydroxyandrost-4-ene-3,17-dione + oxidized [NADPH--hemoprotein reductase] + H2O + H(+). It carries out the reaction 19-hydroxyandrost-4-ene-3,17-dione + reduced [NADPH--hemoprotein reductase] + O2 = 19-oxo-androst-4-ene-3,17-dione + oxidized [NADPH--hemoprotein reductase] + 2 H2O + H(+). The enzyme catalyses 19-oxo-androst-4-ene-3,17-dione + reduced [NADPH--hemoprotein reductase] + O2 = estrone + formate + oxidized [NADPH--hemoprotein reductase] + H2O + 2 H(+). It catalyses the reaction estrone + reduced [NADPH--hemoprotein reductase] + O2 = 2-hydroxyestrone + oxidized [NADPH--hemoprotein reductase] + H2O + H(+). The catalysed reaction is 17beta-hydroxy-5alpha-androstan-3-one + reduced [NADPH--hemoprotein reductase] + O2 = 17beta,19-dihydroxy-3-oxo-5alpha-androstanone + oxidized [NADPH--hemoprotein reductase] + H2O + H(+). It carries out the reaction 17beta,19-dihydroxy-3-oxo-5alpha-androstanone + reduced [NADPH--hemoprotein reductase] + O2 = 17beta-hydroxy-3,19-dioxo-5alpha-androstanone + oxidized [NADPH--hemoprotein reductase] + 2 H2O + H(+). The enzyme catalyses 17beta-hydroxy-3,19-dioxo-5alpha-androstanone + reduced [NADPH--hemoprotein reductase] + O2 = 17beta-hydroxy-3-oxo-19-nor-5alpha-androst-1-ene + formate + oxidized [NADPH--hemoprotein reductase] + H2O + 2 H(+). The protein operates within steroid hormone biosynthesis. Its function is as follows. A cytochrome P450 monooxygenase that catalyzes the conversion of C19 androgens, androst-4-ene-3,17-dione (androstenedione) and testosterone to the C18 estrogens, estrone and estradiol, respectively. Catalyzes three successive oxidations of C19 androgens: two conventional oxidations at C19 yielding 19-hydroxy and 19-oxo/19-aldehyde derivatives, followed by a third oxidative aromatization step that involves C1-beta hydrogen abstraction combined with cleavage of the C10-C19 bond to yield a phenolic A ring and formic acid. Alternatively, the third oxidative reaction yields a 19-norsteroid and formic acid. Converts dihydrotestosterone to delta1,10-dehydro 19-nordihydrotestosterone and may play a role in homeostasis of this potent androgen. Also displays 2-hydroxylase activity toward estrone. Mechanistically, uses molecular oxygen inserting one oxygen atom into a substrate, and reducing the second into a water molecule, with two electrons provided by NADPH via cytochrome P450 reductase (CPR; NADPH-ferrihemoprotein reductase). This Mus musculus (Mouse) protein is Aromatase (Cyp19a1).